The sequence spans 305 residues: UDP-3-O-acyl-N-acetylglucosamine deacetylase (305 aa).

Zn(2+)-binding residues include His79, His238, and Asp242. The Proton donor role is filled by His265.

This sequence belongs to the LpxC family. Zn(2+) serves as cofactor.

The enzyme catalyses a UDP-3-O-[(3R)-3-hydroxyacyl]-N-acetyl-alpha-D-glucosamine + H2O = a UDP-3-O-[(3R)-3-hydroxyacyl]-alpha-D-glucosamine + acetate. Its pathway is glycolipid biosynthesis; lipid IV(A) biosynthesis; lipid IV(A) from (3R)-3-hydroxytetradecanoyl-[acyl-carrier-protein] and UDP-N-acetyl-alpha-D-glucosamine: step 2/6. In terms of biological role, catalyzes the hydrolysis of UDP-3-O-myristoyl-N-acetylglucosamine to form UDP-3-O-myristoylglucosamine and acetate, the committed step in lipid A biosynthesis. The sequence is that of UDP-3-O-acyl-N-acetylglucosamine deacetylase from Haemophilus influenzae (strain PittEE).